Reading from the N-terminus, the 381-residue chain is Alkanesulfonate monooxygenase (381 aa).

The protein belongs to the SsuD family. As to quaternary structure, homotetramer.

It catalyses the reaction an alkanesulfonate + FMNH2 + O2 = an aldehyde + FMN + sulfite + H2O + 2 H(+). In terms of biological role, catalyzes the desulfonation of aliphatic sulfonates. In Shigella flexneri, this protein is Alkanesulfonate monooxygenase.